A 560-amino-acid chain; its full sequence is NAD-dependent malic enzyme (560 aa).

Tyrosine 100 (proton donor) is an active-site residue. Arginine 153 contributes to the NAD(+) binding site. The active-site Proton acceptor is the lysine 171. A divalent metal cation contacts are provided by glutamate 242, aspartate 243, and aspartate 266. Residues aspartate 266 and asparagine 413 each contribute to the NAD(+) site.

It belongs to the malic enzymes family. As to quaternary structure, homotetramer. Requires Mg(2+) as cofactor. Mn(2+) serves as cofactor.

The catalysed reaction is (S)-malate + NAD(+) = pyruvate + CO2 + NADH. The enzyme catalyses oxaloacetate + H(+) = pyruvate + CO2. This is NAD-dependent malic enzyme from Psychromonas ingrahamii (strain DSM 17664 / CCUG 51855 / 37).